We begin with the raw amino-acid sequence, 133 residues long: Small ribosomal subunit protein uS8 (133 aa).

It belongs to the universal ribosomal protein uS8 family. In terms of assembly, part of the 30S ribosomal subunit. Contacts proteins S5 and S12.

In terms of biological role, one of the primary rRNA binding proteins, it binds directly to 16S rRNA central domain where it helps coordinate assembly of the platform of the 30S subunit. The sequence is that of Small ribosomal subunit protein uS8 from Syntrophus aciditrophicus (strain SB).